The primary structure comprises 211 residues: 3,4-dihydroxy-2-butanone 4-phosphate synthase (211 aa).

D-ribulose 5-phosphate-binding positions include 37–38 (RE), aspartate 42, 150–154 (RGGHT), and glutamate 174. Residue glutamate 38 coordinates Mg(2+). Histidine 153 is a Mg(2+) binding site.

It belongs to the DHBP synthase family. In terms of assembly, homodimer. Mg(2+) is required as a cofactor. Mn(2+) serves as cofactor.

It carries out the reaction D-ribulose 5-phosphate = (2S)-2-hydroxy-3-oxobutyl phosphate + formate + H(+). The protein operates within cofactor biosynthesis; riboflavin biosynthesis; 2-hydroxy-3-oxobutyl phosphate from D-ribulose 5-phosphate: step 1/1. In terms of biological role, catalyzes the conversion of D-ribulose 5-phosphate to formate and 3,4-dihydroxy-2-butanone 4-phosphate. The chain is 3,4-dihydroxy-2-butanone 4-phosphate synthase from Baumannia cicadellinicola subsp. Homalodisca coagulata.